A 139-amino-acid chain; its full sequence is Large ribosomal subunit protein bL17 (139 aa).

It belongs to the bacterial ribosomal protein bL17 family. Part of the 50S ribosomal subunit. Contacts protein L32.

The protein is Large ribosomal subunit protein bL17 of Sphingopyxis alaskensis (strain DSM 13593 / LMG 18877 / RB2256) (Sphingomonas alaskensis).